Consider the following 464-residue polypeptide: ATP-dependent protease ATPase subunit HslU (464 aa).

ATP contacts are provided by residues V18, 60–65 (GVGKTE), D277, E342, and R414.

Belongs to the ClpX chaperone family. HslU subfamily. A double ring-shaped homohexamer of HslV is capped on each side by a ring-shaped HslU homohexamer. The assembly of the HslU/HslV complex is dependent on binding of ATP.

It localises to the cytoplasm. ATPase subunit of a proteasome-like degradation complex; this subunit has chaperone activity. The binding of ATP and its subsequent hydrolysis by HslU are essential for unfolding of protein substrates subsequently hydrolyzed by HslV. HslU recognizes the N-terminal part of its protein substrates and unfolds these before they are guided to HslV for hydrolysis. The protein is ATP-dependent protease ATPase subunit HslU of Lactobacillus delbrueckii subsp. bulgaricus (strain ATCC BAA-365 / Lb-18).